Consider the following 208-residue polypeptide: Uracil phosphoribosyltransferase (208 aa).

Residues Arg78, Arg103, and 130-138 (DPMLATGGS) each bind 5-phospho-alpha-D-ribose 1-diphosphate. Uracil-binding positions include Ile193 and 198–200 (GDA). Asp199 lines the 5-phospho-alpha-D-ribose 1-diphosphate pocket.

This sequence belongs to the UPRTase family. It depends on Mg(2+) as a cofactor.

The enzyme catalyses UMP + diphosphate = 5-phospho-alpha-D-ribose 1-diphosphate + uracil. It functions in the pathway pyrimidine metabolism; UMP biosynthesis via salvage pathway; UMP from uracil: step 1/1. Its activity is regulated as follows. Allosterically activated by GTP. Its function is as follows. Catalyzes the conversion of uracil and 5-phospho-alpha-D-ribose 1-diphosphate (PRPP) to UMP and diphosphate. This chain is Uracil phosphoribosyltransferase, found in Shewanella putrefaciens (strain CN-32 / ATCC BAA-453).